Here is a 422-residue protein sequence, read N- to C-terminus: Serine--tRNA ligase (422 aa).

238 to 240 (TSE) contributes to the L-serine binding site. 269-271 (RKE) lines the ATP pocket. L-serine is bound at residue glutamate 292. Residue 356–359 (EISS) coordinates ATP. Serine 390 lines the L-serine pocket.

This sequence belongs to the class-II aminoacyl-tRNA synthetase family. Type-1 seryl-tRNA synthetase subfamily. As to quaternary structure, homodimer. The tRNA molecule binds across the dimer.

The protein localises to the cytoplasm. It carries out the reaction tRNA(Ser) + L-serine + ATP = L-seryl-tRNA(Ser) + AMP + diphosphate + H(+). The enzyme catalyses tRNA(Sec) + L-serine + ATP = L-seryl-tRNA(Sec) + AMP + diphosphate + H(+). It participates in aminoacyl-tRNA biosynthesis; selenocysteinyl-tRNA(Sec) biosynthesis; L-seryl-tRNA(Sec) from L-serine and tRNA(Sec): step 1/1. Catalyzes the attachment of serine to tRNA(Ser). Is also able to aminoacylate tRNA(Sec) with serine, to form the misacylated tRNA L-seryl-tRNA(Sec), which will be further converted into selenocysteinyl-tRNA(Sec). This is Serine--tRNA ligase from Helicobacter hepaticus (strain ATCC 51449 / 3B1).